Consider the following 268-residue polypeptide: Bis(5'-nucleosyl)-tetraphosphatase, symmetrical (268 aa).

The protein belongs to the Ap4A hydrolase family.

It carries out the reaction P(1),P(4)-bis(5'-adenosyl) tetraphosphate + H2O = 2 ADP + 2 H(+). In terms of biological role, hydrolyzes diadenosine 5',5'''-P1,P4-tetraphosphate to yield ADP. This Nitrosomonas europaea (strain ATCC 19718 / CIP 103999 / KCTC 2705 / NBRC 14298) protein is Bis(5'-nucleosyl)-tetraphosphatase, symmetrical.